Here is a 332-residue protein sequence, read N- to C-terminus: L-lactate dehydrogenase A chain (332 aa).

An N-acetylalanine modification is found at alanine 2. N6-acetyllysine; alternate is present on lysine 5. Lysine 5 carries the N6-succinyllysine; alternate modification. The residue at position 14 (lysine 14) is an N6-acetyllysine. 29–57 (GAVGMACAISILMKDLADEVALVDVMEDK) is an NAD(+) binding site. The residue at position 57 (lysine 57) is an N6-acetyllysine; alternate. Residue lysine 57 forms a Glycyl lysine isopeptide (Lys-Gly) (interchain with G-Cter in SUMO2); alternate linkage. Lysine 81 bears the N6-acetyllysine mark. Residue arginine 106 coordinates substrate. Lysine 118 carries the post-translational modification N6-acetyllysine; alternate. Lysine 118 bears the N6-succinyllysine; alternate mark. Lysine 126 is modified (N6-acetyllysine). Asparagine 138 serves as a coordination point for NAD(+). Substrate-binding residues include asparagine 138 and arginine 169. Histidine 193 acts as the Proton acceptor in catalysis. Residues lysine 224 and lysine 232 each carry the N6-acetyllysine modification. The residue at position 239 (tyrosine 239) is a Phosphotyrosine. Lysine 243 bears the N6-acetyllysine mark. Residue threonine 248 coordinates substrate. Threonine 309 carries the phosphothreonine modification. Lysine 318 carries the N6-acetyllysine; alternate modification. The residue at position 318 (lysine 318) is an N6-succinyllysine; alternate. Threonine 322 is subject to Phosphothreonine.

The protein belongs to the LDH/MDH superfamily. LDH family. Homotetramer. Interacts with PTEN upstream reading frame protein MP31. Post-translationally, ISGylated.

The protein localises to the cytoplasm. The catalysed reaction is (S)-lactate + NAD(+) = pyruvate + NADH + H(+). It participates in fermentation; pyruvate fermentation to lactate; (S)-lactate from pyruvate: step 1/1. Its function is as follows. Interconverts simultaneously and stereospecifically pyruvate and lactate with concomitant interconversion of NADH and NAD(+). In Bos mutus grunniens (Wild yak), this protein is L-lactate dehydrogenase A chain (LDHA).